Here is a 418-residue protein sequence, read N- to C-terminus: L-glutamine:2-deoxy-scyllo-inosose aminotransferase (418 aa).

Lys-192 carries the post-translational modification N6-(pyridoxal phosphate)lysine.

It belongs to the DegT/DnrJ/EryC1 family. L-glutamine:2-deoxy-scyllo-inosose/scyllo-inosose aminotransferase subfamily. It depends on pyridoxal 5'-phosphate as a cofactor.

It carries out the reaction 2-deoxy-L-scyllo-inosose + L-glutamine = 2-deoxy-scyllo-inosamine + 2-oxoglutaramate. The catalysed reaction is 3-amino-2,3-dideoxy-scyllo-inosose + L-glutamine = 2-deoxystreptamine + 2-oxoglutaramate. It participates in metabolic intermediate biosynthesis; 2-deoxystreptamine biosynthesis; 2-deoxystreptamine from D-glucose 6-phosphate: step 2/4. It functions in the pathway metabolic intermediate biosynthesis; 2-deoxystreptamine biosynthesis; 2-deoxystreptamine from D-glucose 6-phosphate: step 4/4. Its pathway is antibiotic biosynthesis; butirosin biosynthesis. Its function is as follows. Catalyzes the PLP-dependent transamination of 2-deoxy-scyllo-inosose (2-DOI) to form 2-deoxy-scyllo-inosamine (2-DOIA) using L-glutamine as the amino donor. Also catalyzes the transamination of 3-amino-2,3-dideoxy-scyllo-inosose (keto-2-DOIA) into 2-deoxystreptamine (2-DOS). This Niallia circulans (Bacillus circulans) protein is L-glutamine:2-deoxy-scyllo-inosose aminotransferase (btrR).